The chain runs to 145 residues: Antiholin-like protein LrgA (145 aa).

Helical transmembrane passes span 10–30 (PAHF…SKII), 33–53 (FMPI…VLLC), 72–92 (NIGL…GVIS), and 96–116 (FLII…TGYV).

This sequence belongs to the CidA/LrgA family. LrgA subfamily.

The protein resides in the cell membrane. Its function is as follows. Inhibits the expression or activity of extracellular murein hydrolases by interacting, possibly with LrgB, with the holin-like proteins CidA and/or CidB. The LrgAB and CidAB proteins may affect the proton motive force of the membrane. May be involved in programmed cell death (PCD), possibly triggering PCD in response to antibiotics and environmental stresses. The chain is Antiholin-like protein LrgA from Staphylococcus aureus (strain Mu3 / ATCC 700698).